The chain runs to 396 residues: Elongation factor Tu-B (396 aa).

The region spanning lysine 10–threonine 206 is the tr-type G domain. Residues glycine 19 to threonine 26 are G1. Glycine 19–threonine 26 is a binding site for GTP. Threonine 26 contributes to the Mg(2+) binding site. Residues glycine 60 to serine 64 are G2. A G3 region spans residues aspartate 81 to glycine 84. Residues aspartate 81–histidine 85 and asparagine 136–aspartate 139 each bind GTP. Positions asparagine 136–aspartate 139 are G4. The interval serine 174 to arginine 176 is G5.

The protein belongs to the TRAFAC class translation factor GTPase superfamily. Classic translation factor GTPase family. EF-Tu/EF-1A subfamily. As to quaternary structure, monomer.

It localises to the cytoplasm. It carries out the reaction GTP + H2O = GDP + phosphate + H(+). In terms of biological role, GTP hydrolase that promotes the GTP-dependent binding of aminoacyl-tRNA to the A-site of ribosomes during protein biosynthesis. The polypeptide is Elongation factor Tu-B (Xanthomonas campestris pv. campestris (strain ATCC 33913 / DSM 3586 / NCPPB 528 / LMG 568 / P 25)).